The following is a 272-amino-acid chain: MTLKKLNLHLVSDSSGETVISVAKSALKHFRSIETVEYVWSFVKEEEQIDKILEEINKKSNEHNFVICTITNDKLRKYLKDNCVKLKIPYRAILSHIMREISSYLEIEKDEKFDLHTEINNEYFQRIEAINYTINHDDGQNIQDIDKSDIILIGVSRTSKSPTSMYLAYRGYKVANIPFVGEIPFYFDLAKLKDKLTIGLTIDVNRLVEIRKNRLTSINNEDNSIYADPKKVEKEIKKAEELFKQNNWPIIDVTQKSIEEVSATIIQYFNRM.

154-161 (GVSRTSKS) contributes to the ADP binding site.

Belongs to the pyruvate, phosphate/water dikinase regulatory protein family. PDRP subfamily.

It carries out the reaction N(tele)-phospho-L-histidyl/L-threonyl-[pyruvate, phosphate dikinase] + ADP = N(tele)-phospho-L-histidyl/O-phospho-L-threonyl-[pyruvate, phosphate dikinase] + AMP + H(+). It catalyses the reaction N(tele)-phospho-L-histidyl/O-phospho-L-threonyl-[pyruvate, phosphate dikinase] + phosphate + H(+) = N(tele)-phospho-L-histidyl/L-threonyl-[pyruvate, phosphate dikinase] + diphosphate. In terms of biological role, bifunctional serine/threonine kinase and phosphorylase involved in the regulation of the pyruvate, phosphate dikinase (PPDK) by catalyzing its phosphorylation/dephosphorylation. The protein is Putative pyruvate, phosphate dikinase regulatory protein of Wolbachia sp. subsp. Brugia malayi (strain TRS).